The following is a 307-amino-acid chain: Oxygen-dependent coproporphyrinogen-III oxidase (307 aa).

Ser99 is a substrate binding site. Residues His103 and His113 each contribute to the a divalent metal cation site. His113 serves as the catalytic Proton donor. Substrate is bound at residue 115-117 (NVR). A divalent metal cation-binding residues include His152 and His182. The tract at residues 247-282 (YVEFNLVFDRGTLFGLQSGGRTESILMSMPPVVNWR) is important for dimerization. Position 265–267 (265–267 (GGR)) interacts with substrate.

It belongs to the aerobic coproporphyrinogen-III oxidase family. In terms of assembly, homodimer. The cofactor is a divalent metal cation.

The protein resides in the cytoplasm. It catalyses the reaction coproporphyrinogen III + O2 + 2 H(+) = protoporphyrinogen IX + 2 CO2 + 2 H2O. It functions in the pathway porphyrin-containing compound metabolism; protoporphyrin-IX biosynthesis; protoporphyrinogen-IX from coproporphyrinogen-III (O2 route): step 1/1. In terms of biological role, involved in the heme biosynthesis. Catalyzes the aerobic oxidative decarboxylation of propionate groups of rings A and B of coproporphyrinogen-III to yield the vinyl groups in protoporphyrinogen-IX. The polypeptide is Oxygen-dependent coproporphyrinogen-III oxidase (Paraburkholderia phytofirmans (strain DSM 17436 / LMG 22146 / PsJN) (Burkholderia phytofirmans)).